Reading from the N-terminus, the 129-residue chain is uncharacterized protein (129 aa).

The N-terminal stretch at 1–21 (MAQNKTIAVALLLATLVAVMG) is a signal peptide.

This is an uncharacterized protein from Oryza sativa subsp. japonica (Rice).